Here is a 554-residue protein sequence, read N- to C-terminus: Methyl-coenzyme M reductase II subunit alpha (554 aa).

Glutamine 151 provides a ligand contact to coenzyme F430. Coenzyme B-binding positions include arginine 229, lysine 260–histidine 261, and arginine 274. Residues tyrosine 336 and tyrosine 447 each coordinate coenzyme M.

It belongs to the methyl-coenzyme M reductase alpha subunit family. MCR is a hexamer of two alpha, two beta, and two gamma chains, forming a dimer of heterotrimers. The cofactor is coenzyme F430.

The enzyme catalyses coenzyme B + methyl-coenzyme M = methane + coenzyme M-coenzyme B heterodisulfide. It participates in one-carbon metabolism; methyl-coenzyme M reduction; methane from methyl-coenzyme M: step 1/1. Component of the methyl-coenzyme M reductase (MCR) I that catalyzes the reductive cleavage of methyl-coenzyme M (CoM-S-CH3 or 2-(methylthio)ethanesulfonate) using coenzyme B (CoB or 7-mercaptoheptanoylthreonine phosphate) as reductant which results in the production of methane and the mixed heterodisulfide of CoB and CoM (CoM-S-S-CoB). This is the final step in methanogenesis. This is Methyl-coenzyme M reductase II subunit alpha (mrtA) from Methanothermus fervidus (strain ATCC 43054 / DSM 2088 / JCM 10308 / V24 S).